Reading from the N-terminus, the 395-residue chain is Probable protein arginine N-methyltransferase 6.2 (395 aa).

Over residues 1 to 11 (MFAGGADGGNG) the composition is skewed to gly residues. The disordered stretch occupies residues 1 to 37 (MFAGGADGGNGHLPRPRRARRGGGGGGGMGSPPLGPP). Residues 45-390 (DMAYFKAYSH…YFTRDQWYVK (346 aa)) enclose the SAM-dependent MTase PRMT-type domain. Residues H58, R67, G91, D113, and E142 each coordinate S-adenosyl-L-methionine. Catalysis depends on residues E156 and E165. A disordered region spans residues 300–324 (KKQANQCLDGNTQDASPSNKKKKAD). Residues 302 to 317 (QANQCLDGNTQDASPS) are compositionally biased toward polar residues.

It belongs to the class I-like SAM-binding methyltransferase superfamily. Protein arginine N-methyltransferase family. PRMT6 subfamily.

Arginine methyltransferase that can both catalyze the formation of omega-N monomethylarginine (MMA) and asymmetrical dimethylarginine (aDMA). This chain is Probable protein arginine N-methyltransferase 6.2 (PRMT6.2), found in Oryza sativa subsp. indica (Rice).